A 46-amino-acid chain; its full sequence is uncharacterized protein (46 aa).

The helical transmembrane segment at 20–42 (MAMIWVVAALVIALVVGTALNYI) threads the bilayer.

The protein localises to the membrane. This is an uncharacterized protein from Bacillus subtilis (strain 168).